The primary structure comprises 295 residues: Hydroxylase/desaturase efuI (295 aa).

The protein belongs to the asaB hydroxylase/desaturase family.

Its pathway is secondary metabolite biosynthesis; terpenoid biosynthesis. In terms of biological role, hydroxylase/desaturase; part of the gene cluster that mediates the biosynthesis of enfumafungin, a glycosylated fernene-type triterpenoid with potent antifungal activity, mediated by its interaction with beta-1,3-glucan synthase and the fungal cell wall. The pathway begins with the terpene cyclase-glycosyl transferase fusion protein that most likely uses 2,3-oxidosqualene as substrate and catalyzes glycosylation immediately after cyclization. The fernene glycoside then could be processed by the desaturase efuI which catalyzes isomerization of a double bond established by efuA to form the core structure. The latter would then undergo a series of hydroxylations in unknown order at C-2, C-19, C-23 and C-25, which would be catalyzed by two of the three cytochrome P450 monooxygenases efuB, efuG or efuH. The hydroxy-group at C-25 becomes oxidized by the dehydrogenase efuE to enable a spontaneous, non-enzymatic hemiacetal formation with C-23. After hydroxylation at C-2, acetylation by the acetyltransferase efuC takes place. The final steps in enfumafungin biosynthesis require expansion of the 5-membered ring by lactonization via a Baeyer-Villiger reaction mediated by one of the BGC's cytochrome P450 monooxygenases (efuB, efuG or efuH) followed by ring cleavage. This type of reaction would establish a double bond between C-20 and C-21 which could be reduced by the reductase efuL to form the final product. The chain is Hydroxylase/desaturase efuI from Hormonema carpetanum.